A 1525-amino-acid chain; its full sequence is Multidrug resistance-associated protein 1 (1525 aa).

Residues 1–33 (MGIESLCSADASEPFWDWNLTWHTENPDFTQCF) lie on the Extracellular side of the membrane. A helical transmembrane segment spans residues 34-54 (QNTVLVWVPCIYLWVCFPAYF). Over 55-74 (LYLRSHDRGYIQMSILNKAK) the chain is Cytoplasmic. Residues 75–95 (TALGLILWIVCWADLFYSFWE) traverse the membrane as a helical segment. Over 96 to 100 (RSQNI) the chain is Extracellular. A helical transmembrane segment spans residues 101 to 121 (FRAPFFLISPTVLGITMLLAT). Over 122-133 (FLIQHERLKGVQ) the chain is Cytoplasmic. A helical transmembrane segment spans residues 134-154 (SSGVMMIFWLISLLCATVIFR). Residues 155-172 (SKIMLALNTDTEVDAFRY) lie on the Extracellular side of the membrane. Residues 173–193 (VTFCTYFILLLVQLILSCFPE) form a helical membrane-spanning segment. The Cytoplasmic segment spans residues 194–315 (KPPLFSEAVN…RSSEASLSKV (122 aa)). Residues 316-336 (LYKTFGPYFLMSFLFKAAHDL) form a helical membrane-spanning segment. The 284-residue stretch at 324–607 (FLMSFLFKAA…LPMVISSIVE (284 aa)) folds into the ABC transmembrane type-1 1 domain. The Extracellular segment spans residues 337–362 (LMFTGPEILKLLINFVNNKSAPNWQG). A helical transmembrane segment spans residues 363 to 383 (YFYTGLLFVCACLQTLILHQY). Residues 384–439 (FHICFVTGMRLKTAIVGVIYRKALVITNSARKTSTVGEIVNLMSVDAQRFMDLATY) lie on the Cytoplasmic side of the membrane. The helical transmembrane segment at 440–460 (INMIWSAPLQVILALYLLWRN) threads the bilayer. The Extracellular segment spans residues 461-463 (LGP). The chain crosses the membrane as a helical span at residues 464–484 (SVLAGVAVMILLVPINAVMAM). The Cytoplasmic segment spans residues 485-546 (KTKTYQVAQM…VLKKSAYLAA (62 aa)). The helical transmembrane segment at 547 to 567 (MGTFTWVCAPFLVALSTFAVY) threads the bilayer. Topologically, residues 568–589 (VKVNKNNILDAQKAFVSLALFN) are extracellular. A helical membrane pass occupies residues 590–610 (ILRFPLNILPMVISSIVEASV). Topologically, residues 611–961 (SLKRLRVFLS…VKATVYWEYM (351 aa)) are cytoplasmic. In terms of domain architecture, ABC transporter 1 spans 641-865 (IVVKNATFSW…DGAFAEFLRT (225 aa)). Residue 675–682 (GQVGCGKS) coordinates ATP. Composition is skewed to polar residues over residues 871–882 (QSMESSDASSPS) and 908–928 (SNSS…STAE). Disordered regions lie at residues 871 to 891 (QSME…PVEN) and 908 to 930 (SNSS…AELQ). The helical transmembrane segment at 962 to 982 (KAIGLYISFLSVFLFMCNHIA) threads the bilayer. The region spanning 969–1250 (SFLSVFLFMC…LVRMTSDLET (282 aa)) is the ABC transmembrane type-1 2 domain. Over 983–1019 (SLASNYWLSLWTDDPVVNGTQQYTNVRLGVYGALGIS) the chain is Extracellular. Residues 1020–1040 (QGIAVFGYSMAVSIGGIFASR) form a helical membrane-spanning segment. Residues 1041–1083 (HLHLDLLHNVLRSPMSFFERTPSGNLVSRFSKEIDTIDSTIPP) are Cytoplasmic-facing. The chain crosses the membrane as a helical span at residues 1084–1104 (IIKMFMGSTFNVIGACIIILL). Residue alanine 1105 is a topological domain, extracellular. Residues 1106-1126 (TPIAAVVIPPLGLVYLLVQRF) traverse the membrane as a helical segment. Topologically, residues 1127 to 1197 (YVATSRQLKR…VANRWLAVRL (71 aa)) are cytoplasmic. Residues 1198-1218 (EFVGNCIVLFAALFAVIARNK) traverse the membrane as a helical segment. The Extracellular portion of the chain corresponds to 1219–1220 (LS). The chain crosses the membrane as a helical span at residues 1221 to 1241 (PGLIGLSVSYSLQITAYLNWL). The Cytoplasmic portion of the chain corresponds to 1242–1525 (VRMTSDLETN…YSMAKDSGLA (284 aa)). Residues 1289-1521 (FRGFGLRYRE…KGLFYSMAKD (233 aa)) form the ABC transporter 2 domain. 1321–1328 (GRTGAGKS) lines the ATP pocket.

Belongs to the ABC transporter superfamily. ABCC family. Conjugate transporter (TC 3.A.1.208) subfamily.

The protein resides in the cell membrane. It carries out the reaction ATP + H2O + xenobioticSide 1 = ADP + phosphate + xenobioticSide 2.. It catalyses the reaction an S-substituted glutathione(in) + ATP + H2O = an S-substituted glutathione(out) + ADP + phosphate + H(+). The catalysed reaction is sphing-4-enine 1-phosphate(in) + ATP + H2O = sphing-4-enine 1-phosphate(out) + ADP + phosphate + H(+). The enzyme catalyses leukotriene C4(in) + ATP + H2O = leukotriene C4(out) + ADP + phosphate + H(+). It carries out the reaction 17beta-estradiol 17-O-(beta-D-glucuronate)(in) + ATP + H2O = 17beta-estradiol 17-O-(beta-D-glucuronate)(out) + ADP + phosphate + H(+). It catalyses the reaction 2',3'-cGAMP(in) + ATP + H2O = 2',3'-cGAMP(out) + ADP + phosphate + H(+). In terms of biological role, mediates export of organic anions and drugs from the cytoplasm. Mediates ATP-dependent transport of glutathione and glutathione conjugates, leukotriene C4, estradiol-17-beta-o-glucuronide and other xenobiotics. Hydrolyzes ATP with low efficiency. Mediates ATP-dependent, GSH-independent cyclic GMP-AMP (cGAMP) export. Thus, by limiting intracellular cGAMP concentrations negatively regulates the cGAS-STING pathway. The sequence is that of Multidrug resistance-associated protein 1 from Gallus gallus (Chicken).